Reading from the N-terminus, the 310-residue chain is tRNA-cytidine(32) 2-sulfurtransferase (310 aa).

The short motif at 45 to 50 (SGGKDS) is the PP-loop motif element. Residues Cys-120, Cys-123, and Cys-211 each coordinate [4Fe-4S] cluster.

This sequence belongs to the TtcA family. In terms of assembly, homodimer. The cofactor is Mg(2+). [4Fe-4S] cluster is required as a cofactor.

The protein localises to the cytoplasm. It catalyses the reaction cytidine(32) in tRNA + S-sulfanyl-L-cysteinyl-[cysteine desulfurase] + AH2 + ATP = 2-thiocytidine(32) in tRNA + L-cysteinyl-[cysteine desulfurase] + A + AMP + diphosphate + H(+). It functions in the pathway tRNA modification. Its function is as follows. Catalyzes the ATP-dependent 2-thiolation of cytidine in position 32 of tRNA, to form 2-thiocytidine (s(2)C32). The sulfur atoms are provided by the cysteine/cysteine desulfurase (IscS) system. The sequence is that of tRNA-cytidine(32) 2-sulfurtransferase from Shewanella putrefaciens (strain CN-32 / ATCC BAA-453).